Reading from the N-terminus, the 64-residue chain is Large ribosomal subunit protein bL35 (64 aa).

The protein belongs to the bacterial ribosomal protein bL35 family.

This is Large ribosomal subunit protein bL35 from Shewanella putrefaciens (strain CN-32 / ATCC BAA-453).